A 294-amino-acid polypeptide reads, in one-letter code: ATP synthase gamma chain (294 aa).

It belongs to the ATPase gamma chain family. As to quaternary structure, F-type ATPases have 2 components, CF(1) - the catalytic core - and CF(0) - the membrane proton channel. CF(1) has five subunits: alpha(3), beta(3), gamma(1), delta(1), epsilon(1). CF(0) has three main subunits: a, b and c.

It localises to the cell inner membrane. Functionally, produces ATP from ADP in the presence of a proton gradient across the membrane. The gamma chain is believed to be important in regulating ATPase activity and the flow of protons through the CF(0) complex. This is ATP synthase gamma chain from Campylobacter jejuni subsp. jejuni serotype O:2 (strain ATCC 700819 / NCTC 11168).